We begin with the raw amino-acid sequence, 113 residues long: Biotrophy-associated secreted protein 3 (113 aa).

The signal sequence occupies residues 1–20; the sequence is MQFSTVSFAIFAILPAMVAA.

The protein resides in the secreted. Functionally, secreted effector involved in biotrophic colonization of plant cells. This is Biotrophy-associated secreted protein 3 from Pyricularia oryzae (strain 70-15 / ATCC MYA-4617 / FGSC 8958) (Rice blast fungus).